The chain runs to 237 residues: Ribonuclease 3 (237 aa).

In terms of domain architecture, RNase III spans 8-134 (RSALLEKLGV…VIGAVYLDAG (127 aa)). Position 47 (E47) interacts with Mg(2+). Residue D51 is part of the active site. D120 and E123 together coordinate Mg(2+). Residue E123 is part of the active site. Positions 161–229 (DPKTSLQEAA…ALSAWTALTN (69 aa)) constitute a DRBM domain.

Belongs to the ribonuclease III family. As to quaternary structure, homodimer. It depends on Mg(2+) as a cofactor.

The protein localises to the cytoplasm. It catalyses the reaction Endonucleolytic cleavage to 5'-phosphomonoester.. Functionally, digests double-stranded RNA. Involved in the processing of primary rRNA transcript to yield the immediate precursors to the large and small rRNAs (23S and 16S). Processes some mRNAs, and tRNAs when they are encoded in the rRNA operon. Processes pre-crRNA and tracrRNA of type II CRISPR loci if present in the organism. This Leifsonia xyli subsp. xyli (strain CTCB07) protein is Ribonuclease 3.